The primary structure comprises 529 residues: Low affinity inorganic phosphate transporter 4 (529 aa).

Topologically, residues 1-21 (MASDNLVVLNALDTARTQWYH) are cytoplasmic. Residues 22-42 (VTAVIIAGMGFFTDAYDLFCI) traverse the membrane as a helical segment. Over 43 to 71 (STVSKLLGRLYYYDPSTKAPGKLPHMANN) the chain is Extracellular. A helical membrane pass occupies residues 72–92 (WVIGVALVGTLSGQLVFGWLG). Topologically, residues 93-99 (DKLGRKK) are cytoplasmic. Residues 100 to 120 (VYGLTLILMVICALCSGLSLG) form a helical membrane-spanning segment. At 121–125 (YSPKS) the chain is on the extracellular side. The helical transmembrane segment at 126–146 (VIGTLCFFRFWLGFGIGGDYP) threads the bilayer. Topologically, residues 147 to 161 (LSATIMSEYANKSTR) are cytoplasmic. Residues 162–182 (GAFIAAVFAMQGVGIIFAGLV) form a helical membrane-spanning segment. Residues 183–211 (SMTISKVFLMNFEGKPFNVDEVLSTEPEA) lie on the Extracellular side of the membrane. A helical membrane pass occupies residues 212–232 (DYVWRIVLMLGALPALLTYYW). Residues 233-291 (RMKMPETGRYTAIIEGNAKQAAIDMGKVLDIEIQAEGDKLAQFKAANEYSLLSNEFFQR) lie on the Cytoplasmic side of the membrane. The chain crosses the membrane as a helical span at residues 292–312 (HGLHLIGTMSTWFLLDIAFYS). Residues 313 to 344 (QNLTQKDIFPVMGLTSKANTISALREMFETSR) lie on the Extracellular side of the membrane. Residue asparagine 314 is glycosylated (N-linked (GlcNAc...) asparagine). The helical transmembrane segment at 345–365 (AMFVIALFGTFPGYWFTVFFI) threads the bilayer. Topologically, residues 366-374 (EKIGRFKIQ) are cytoplasmic. A helical membrane pass occupies residues 375-395 (LVGFFMMSVFMAIIGVKYDYL). The Extracellular portion of the chain corresponds to 396–405 (RNKEHKWTFA). Residues 406–426 (ALYGLTFFFANFGPNSTTFVL) form a helical membrane-spanning segment. At 427-437 (PAELFPTRVRS) the chain is on the cytoplasmic side. A helical membrane pass occupies residues 438–458 (TCHALSAALGKAGAMISAFGI). Over 459-471 (QQYTQDQDVRKIK) the chain is Extracellular. Residues 472-492 (TAMLLLAFTNMVGFCCTFLVT) traverse the membrane as a helical segment. Topologically, residues 493-529 (ETKGRSLEEISGEDGRQNETQMKTTRPVSGHPDDGWE) are cytoplasmic. Positions 501 to 529 (EISGEDGRQNETQMKTTRPVSGHPDDGWE) are disordered. Polar residues predominate over residues 510–519 (NETQMKTTRP).

The protein belongs to the major facilitator superfamily. Phosphate:H(+) symporter (TC 2.A.1.9) family.

It is found in the cell membrane. The enzyme catalyses phosphate(in) + H(+)(in) = phosphate(out) + H(+)(out). Functionally, low-affinity transporter for external inorganic phosphate (Pi) probably involved in the acquisition of phosphate released by arbuscular mycorrhizal (AM) fungi (e.g. Rhizophagus irregularis and Glomus intraradices) during AM symbiosis. Acts as a Pi-sensing machinery at the root tip level, independently of AM fungi, involved in the regulation of early root branching and lateral roots formation. The polypeptide is Low affinity inorganic phosphate transporter 4 (Petunia hybrida (Petunia)).